The primary structure comprises 96 residues: MKLRPLHDRVIVKRLEQETKTASGIVIPDNAAEKPDQGEVLAVGPGKRNDKGDFVALNVAVGDRVLFGKYSGQTVKVDGDELLVMREEDLFAVVGK.

It belongs to the GroES chaperonin family. As to quaternary structure, heptamer of 7 subunits arranged in a ring. Interacts with the chaperonin GroEL.

The protein localises to the cytoplasm. Its function is as follows. Together with the chaperonin GroEL, plays an essential role in assisting protein folding. The GroEL-GroES system forms a nano-cage that allows encapsulation of the non-native substrate proteins and provides a physical environment optimized to promote and accelerate protein folding. GroES binds to the apical surface of the GroEL ring, thereby capping the opening of the GroEL channel. This Leptothrix cholodnii (strain ATCC 51168 / LMG 8142 / SP-6) (Leptothrix discophora (strain SP-6)) protein is Co-chaperonin GroES.